Here is a 427-residue protein sequence, read N- to C-terminus: 3-phosphoshikimate 1-carboxyvinyltransferase (427 aa).

Phosphoenolpyruvate is bound at residue lysine 20. Residues serine 21 and arginine 25 each contribute to the 3-phosphoshikimate site. The phosphoenolpyruvate site is built by glycine 92 and arginine 120. Residues serine 166, alanine 167, glutamine 168, aspartate 312, and lysine 339 each coordinate 3-phosphoshikimate. Glutamine 168 contacts phosphoenolpyruvate. Residue aspartate 312 is the Proton acceptor of the active site. Positions 343 and 385 each coordinate phosphoenolpyruvate.

In terms of assembly, homotetramer.

It is found in the cytoplasm. It catalyses the reaction 3-phosphoshikimate + phosphoenolpyruvate = 5-O-(1-carboxyvinyl)-3-phosphoshikimate + phosphate. The protein operates within metabolic intermediate biosynthesis; chorismate biosynthesis; chorismate from D-erythrose 4-phosphate and phosphoenolpyruvate: step 6/7. Its activity is regulated as follows. Competitively inhibited by glyphosate. Activated by ammonium, rubidium or potassium ions. Catalyzes the transfer of the enolpyruvyl moiety of phosphoenolpyruvate (PEP) to the 5-hydroxyl of shikimate-3-phosphate (S3P) to produce enolpyruvyl shikimate-3-phosphate and inorganic phosphate. The protein is 3-phosphoshikimate 1-carboxyvinyltransferase of Streptococcus pneumoniae serotype 4 (strain ATCC BAA-334 / TIGR4).